Consider the following 363-residue polypeptide: Phosphoserine aminotransferase (363 aa).

Residue Arg-42 coordinates L-glutamate. Residues 76 to 77 (AS), Trp-101, Thr-151, Asp-170, and Gln-193 contribute to the pyridoxal 5'-phosphate site. Lys-194 carries the N6-(pyridoxal phosphate)lysine modification. 234 to 235 (NT) is a pyridoxal 5'-phosphate binding site.

Belongs to the class-V pyridoxal-phosphate-dependent aminotransferase family. SerC subfamily. In terms of assembly, homodimer. It depends on pyridoxal 5'-phosphate as a cofactor.

It localises to the cytoplasm. The enzyme catalyses O-phospho-L-serine + 2-oxoglutarate = 3-phosphooxypyruvate + L-glutamate. It carries out the reaction 4-(phosphooxy)-L-threonine + 2-oxoglutarate = (R)-3-hydroxy-2-oxo-4-phosphooxybutanoate + L-glutamate. Its pathway is amino-acid biosynthesis; L-serine biosynthesis; L-serine from 3-phospho-D-glycerate: step 2/3. Its function is as follows. Catalyzes the reversible conversion of 3-phosphohydroxypyruvate to phosphoserine and of 3-hydroxy-2-oxo-4-phosphonooxybutanoate to phosphohydroxythreonine. In Listeria monocytogenes serotype 4b (strain F2365), this protein is Phosphoserine aminotransferase.